A 461-amino-acid chain; its full sequence is pre-mRNA splicing regulator USH1G (461 aa).

3 ANK repeats span residues 31 to 60, 64 to 93, and 97 to 126; these read DGMT…DPDK, WGNT…NIWC, and DYHT…KQSS. 2 disordered regions span residues 208–243 and 332–368; these read GTAR…SARS and EDGG…DRSC. The segment covering 210–222 has biased composition (basic residues); it reads ARGKTKMQKKLER. Residues 385–447 form the SAM domain; it reads LEPETSPLET…KILGAVRRRR (63 aa). Ser-422 is modified (phosphoserine; by CK2).

In terms of assembly, part of a complex composed of USH1C, USH1G and MYO7A. Interacts with USH1C (via the first PDZ domain). Interacts with PDZD7. Interacts with CDH23 and PCDH15; these interactions may recruit USH1G to the plasma membrane. Interacts with intraflagellar transport proteins IFT20, IFT52 and IFT57. Interacts with splicing factors SF3B1, PRPF6, PRPF31 and SON. Interacts with the U4/U6.U5 tri-small nuclear ribonucleoprotein (tri-snRNP) complex in the presence of pre-mRNAs. Interacts (via SAM domain) with MAGI2 (via PDZ 6 domain); the interaction is triggered by phosphorylation of USH1G by CK2 and negatively regulates MAGI2-mediated endocytosis. In terms of tissue distribution, expressed in vestibule of the inner ear, eye and small intestine.

It localises to the cytoplasm. The protein resides in the cytosol. Its subcellular location is the cytoskeleton. The protein localises to the cell membrane. It is found in the cell projection. It localises to the cilium. The protein resides in the nucleus speckle. Its subcellular location is the nucleus. The protein localises to the cajal body. It is found in the microtubule organizing center. It localises to the centrosome. The protein resides in the photoreceptor inner segment. Its function is as follows. Plays a role in pre-mRNA splicing by regulating the release and transfer of U4/U6.U5 tri-small nuclear ribonucleoprotein (tri-snRNP) complexes from their assembly site in Cajal bodies to nuclear speckles, thereby contributing to the assembly of the pre-catalytic spliceosome on target pre-mRNAs. May also participate in recycling of snRNPs back to Cajal bodies during splicing. Plays a role in regulating MAGI2-mediated endocytosis. Anchoring/scaffolding protein that is a part of the functional network formed by USH1C, USH1G, CDH23 and MYO7A that mediates mechanotransduction in cochlear hair cells. Required for normal development and maintenance of cochlear hair cell bundles. Required for normal hearing. This Homo sapiens (Human) protein is pre-mRNA splicing regulator USH1G (USH1G).